The following is a 79-amino-acid chain: MENLNVDMLYIAVAIMVGLASIGAAIGIGILGGKFLEGAARQPDLVPLLRTQFFVVMGLVDAIPMIAVGLGLYMLFAIS.

The next 2 membrane-spanning stretches (helical) occupy residues 11–31 and 53–73; these read IAVA…IGIL and FFVV…LGLY.

Belongs to the ATPase C chain family. In terms of assembly, F-type ATPases have 2 components, F(1) - the catalytic core - and F(0) - the membrane proton channel. F(1) has five subunits: alpha(3), beta(3), gamma(1), delta(1), epsilon(1). F(0) has three main subunits: a(1), b(2) and c(10-14). The alpha and beta chains form an alternating ring which encloses part of the gamma chain. F(1) is attached to F(0) by a central stalk formed by the gamma and epsilon chains, while a peripheral stalk is formed by the delta and b chains.

The protein localises to the cell membrane. F(1)F(0) ATP synthase produces ATP from ADP in the presence of a proton or sodium gradient. F-type ATPases consist of two structural domains, F(1) containing the extramembraneous catalytic core and F(0) containing the membrane proton channel, linked together by a central stalk and a peripheral stalk. During catalysis, ATP synthesis in the catalytic domain of F(1) is coupled via a rotary mechanism of the central stalk subunits to proton translocation. Its function is as follows. Key component of the F(0) channel; it plays a direct role in translocation across the membrane. A homomeric c-ring of between 10-14 subunits forms the central stalk rotor element with the F(1) delta and epsilon subunits. The protein is ATP synthase subunit c of Buchnera aphidicola subsp. Acyrthosiphon pisum (strain 5A).